A 57-amino-acid polypeptide reads, in one-letter code: MKRQKRDRLERAQSQGYKAGLNGRSHDECPYQQTEVRSYWLGGWRDARNDKLSGLCK.

The tract at residues 1-28 (MKRQKRDRLERAQSQGYKAGLNGRSHDE) is disordered.

Belongs to the ribosome modulation factor family.

The protein resides in the cytoplasm. Functionally, during stationary phase, converts 70S ribosomes to an inactive dimeric form (100S ribosomes). In Vibrio cholerae serotype O1 (strain MJ-1236), this protein is Ribosome modulation factor.